A 449-amino-acid polypeptide reads, in one-letter code: Required for meiotic nuclear division protein 1 homolog (449 aa).

The transit peptide at 1–12 (MPATLLRAVARS) directs the protein to the mitochondrion.

The protein belongs to the RMD1/sif2 family. As to quaternary structure, homooligomer.

It is found in the mitochondrion. Required for mitochondrial translation, possibly by coordinating the assembly or maintenance of the mitochondrial ribosome. The protein is Required for meiotic nuclear division protein 1 homolog (RMND1) of Homo sapiens (Human).